The primary structure comprises 317 residues: L-lactate dehydrogenase 1 (317 aa).

Residues Val-17, Asp-38, Lys-43, Tyr-69, and 83 to 84 (GA) each bind NAD(+). Residues Gln-86 and Arg-92 each coordinate substrate. NAD(+) contacts are provided by residues Ser-105, 122–124 (ATN), and Ser-147. 124–127 (NPVD) is a binding site for substrate. 152-155 (DSAR) contacts substrate. His-179 functions as the Proton acceptor in the catalytic mechanism. Tyr-223 carries the phosphotyrosine modification. Thr-232 is a substrate binding site.

Belongs to the LDH/MDH superfamily. LDH family. In terms of assembly, homotetramer.

Its subcellular location is the cytoplasm. The catalysed reaction is (S)-lactate + NAD(+) = pyruvate + NADH + H(+). Its pathway is fermentation; pyruvate fermentation to lactate; (S)-lactate from pyruvate: step 1/1. Its function is as follows. Catalyzes the conversion of lactate to pyruvate (Potential). Appears to be the primary factor that allows S.aureus growth during nitrosative stress in both aerobically and anaerobically cultured cells. This chain is L-lactate dehydrogenase 1, found in Staphylococcus aureus (strain JH1).